The primary structure comprises 1378 residues: DNA-directed RNA polymerase subunit beta (1378 aa).

This sequence belongs to the RNA polymerase beta chain family. In terms of assembly, the RNAP catalytic core consists of 2 alpha, 1 beta, 1 beta' and 1 omega subunit. When a sigma factor is associated with the core the holoenzyme is formed, which can initiate transcription.

The enzyme catalyses RNA(n) + a ribonucleoside 5'-triphosphate = RNA(n+1) + diphosphate. Functionally, DNA-dependent RNA polymerase catalyzes the transcription of DNA into RNA using the four ribonucleoside triphosphates as substrates. In Ruegeria pomeroyi (strain ATCC 700808 / DSM 15171 / DSS-3) (Silicibacter pomeroyi), this protein is DNA-directed RNA polymerase subunit beta.